The sequence spans 538 residues: Phosphoenolpyruvate carboxykinase (ATP) (538 aa).

Substrate contacts are provided by Arg-64, Tyr-205, and Lys-211. Residues Lys-211, His-230, and 246–254 (GLSGTGKTT) each bind ATP. Mn(2+) is bound by residues Lys-211 and His-230. Asp-267 is a Mn(2+) binding site. Residues Glu-295, Arg-331, 447–448 (RI), and Thr-453 contribute to the ATP site. A substrate-binding site is contributed by Arg-331.

The protein belongs to the phosphoenolpyruvate carboxykinase (ATP) family. In terms of assembly, monomer. Mn(2+) is required as a cofactor.

The protein localises to the cytoplasm. The catalysed reaction is oxaloacetate + ATP = phosphoenolpyruvate + ADP + CO2. The protein operates within carbohydrate biosynthesis; gluconeogenesis. Involved in the gluconeogenesis. Catalyzes the conversion of oxaloacetate (OAA) to phosphoenolpyruvate (PEP) through direct phosphoryl transfer between the nucleoside triphosphate and OAA. The polypeptide is Phosphoenolpyruvate carboxykinase (ATP) (Haemophilus influenzae (strain ATCC 51907 / DSM 11121 / KW20 / Rd)).